Consider the following 347-residue polypeptide: N-acetyl-gamma-glutamyl-phosphate reductase (347 aa).

C153 is an active-site residue.

It belongs to the NAGSA dehydrogenase family. Type 1 subfamily.

It is found in the cytoplasm. The enzyme catalyses N-acetyl-L-glutamate 5-semialdehyde + phosphate + NADP(+) = N-acetyl-L-glutamyl 5-phosphate + NADPH + H(+). It functions in the pathway amino-acid biosynthesis; L-arginine biosynthesis; N(2)-acetyl-L-ornithine from L-glutamate: step 3/4. Catalyzes the NADPH-dependent reduction of N-acetyl-5-glutamyl phosphate to yield N-acetyl-L-glutamate 5-semialdehyde. The chain is N-acetyl-gamma-glutamyl-phosphate reductase from Mycobacterium leprae (strain Br4923).